We begin with the raw amino-acid sequence, 91 residues long: Transcription factor znf27 (91 aa).

It is found in the nucleus. Its function is as follows. Transcription factor; part of the gene cluster 27 that mediates the biosynthesis of asparasone A, a sclerotium-specific anthraquinone pigment important for sclerotial survival. Controls the expression of the non-reducing polyketide synthase (NRPKS) pks27. This Aspergillus flavus (strain ATCC 200026 / FGSC A1120 / IAM 13836 / NRRL 3357 / JCM 12722 / SRRC 167) protein is Transcription factor znf27.